The primary structure comprises 556 residues: Polyphenol oxidase 2 (556 aa).

Cu cation contacts are provided by His-57, His-81, His-90, His-250, His-254, and His-282. The segment at residues 79-81 (CTH) is a cross-link (2'-(S-cysteinyl)-histidine (Cys-His)). Substrate is bound at residue His-254. Positions 379–556 (SKPSSGARNT…FDDVAVHVIN (178 aa)) are cleaved as a propeptide — removed in mature form.

Belongs to the tyrosinase family. Heterotetramer. The cofactor is Cu(2+). In terms of processing, the C-ter is probably cleaved after Gly-378 since the mature active protein is smaller than the protein encoded by the gene.

The catalysed reaction is 2 L-dopa + O2 = 2 L-dopaquinone + 2 H2O. It carries out the reaction L-tyrosine + O2 = L-dopaquinone + H2O. Its function is as follows. Copper-containing oxidase that catalyzes both the o-hydroxylation of monophenols and the subsequent oxidation of the resulting o-diphenols into reactive o-quinones, which evolve spontaneously to produce intermediates, which associate in dark brown pigments. Involved in the initial step of melanin synthesis. Melanins constitute a mechanism of defense and resistance to stress such as UV radiations, free radicals, gamma rays, dehydratation and extreme temperatures, and contribute to the fungal cell-wall resistance against hydrolytic enzymes in avoiding cellular lysis. Fungal pigments are also involved in the formation and stability of spores. The protein is Polyphenol oxidase 2 (PPO2) of Agaricus bisporus (White button mushroom).